We begin with the raw amino-acid sequence, 189 residues long: UPF0398 protein LCK_00599 (189 aa).

It belongs to the UPF0398 family.

The protein is UPF0398 protein LCK_00599 of Leuconostoc citreum (strain KM20).